The chain runs to 330 residues: Laforin (330 aa).

A CBM20 domain is found at 1-123 (MLFRFGVVVP…DNLVDGVYCL (123 aa)). At Ser25 the chain carries Phosphoserine; by AMPK. Substrate contacts are provided by residues Trp32, Lys86, 102 to 106 (GPHHD), Asp196, Asp234, and Arg240. A Tyrosine-protein phosphatase domain is found at 155–322 (HYSRILPNIW…QQDFSQKFGK (168 aa)). Cys265 functions as the Phosphocysteine intermediate in the catalytic mechanism. A Glucan phosphatase signature motif CXAGXGR motif is present at residues 265–271 (CNAGVGR). Residues 266 to 271 (NAGVGR) and Tyr303 contribute to the substrate site.

It belongs to the protein-tyrosine phosphatase family. In terms of assembly, homodimer. Interacts with PPP1R3B, PPP1R3C, HIRIP5, and EPM2AIP1. Binds glycogen and Lafora bodies. Interacts with NHLRC1/malin (via the NHL repeats). Forms a complex with NHLRC1/malin and HSP70. Interacts with PPP1R3D; in the presence of NHLC1/malin the interaction leads to ubiquitination and autophagic degradation of PPP1R3D. Interacts (via the phosphatase domain) with MAPT/Tau; the interaction dephosphorylates MAPT. Interacts with PRDM8. Polyubiquitinated by NHLRC1/malin. In terms of processing, phosphorylation on Ser-25 by AMPK affects the phosphatase activity of the enzyme and its ability to homodimerize and interact with NHLRC1, PPP1R3C or PRKAA2. Detected in skeletal muscle and in brain (at protein level). Widely expressed. Higher levels of expression are found in heart, brain, liver, skeletal muscle and kidney.

The protein localises to the cytoplasm. The protein resides in the endoplasmic reticulum membrane. Its subcellular location is the cell membrane. The enzyme catalyses O-phospho-L-tyrosyl-[protein] + H2O = L-tyrosyl-[protein] + phosphate. It carries out the reaction O-phospho-L-seryl-[protein] + H2O = L-seryl-[protein] + phosphate. The catalysed reaction is O-phospho-L-threonyl-[protein] + H2O = L-threonyl-[protein] + phosphate. Its function is as follows. Plays an important role in preventing glycogen hyperphosphorylation and the formation of insoluble aggregates, via its activity as glycogen phosphatase, and by promoting the ubiquitination of proteins involved in glycogen metabolism via its interaction with the E3 ubiquitin ligase NHLRC1/malin. Dephosphorylates phosphotyrosine and synthetic substrates, such as para-nitrophenylphosphate (pNPP), and has low activity with phosphoserine and phosphothreonine substrates (in vitro). Has also been shown to dephosphorylate MAPT. Shows strong phosphatase activity towards complex carbohydrates in vitro, avoiding glycogen hyperphosphorylation which is associated with reduced branching and formation of insoluble aggregates. Forms a complex with NHLRC1/malin and HSP70, which suppresses the cellular toxicity of misfolded proteins by promoting their degradation through the ubiquitin-proteasome system (UPS). Acts as a scaffold protein to facilitate PPP1R3C/PTG ubiquitination by NHLRC1/malin. Also promotes proteasome-independent protein degradation through the macroautophagy pathway. This Mus musculus (Mouse) protein is Laforin (Epm2a).